Here is a 393-residue protein sequence, read N- to C-terminus: Staphopain B (393 aa).

Residues 1-36 (MNSSCKTRVFNIISIIMVSMLILSLGAFANNNKAKA) form the signal peptide. The propeptide occupies 37–219 (DSHSKQLEIN…KVEENEAIQE (183 aa)). Active-site residues include Cys243, His340, and Asn360.

This sequence belongs to the peptidase C47 family. In the cytoplasm, prematurely activated/folded SspB forms a stable non-covalent complex with SspC. Post-translationally, proteolytically cleaved by staphylococcal serine protease (SspA).

Its subcellular location is the secreted. Its activity is regulated as follows. Prematurely activated/folded staphopain B is inhibited by staphostatin B (SspC), which is probably required to protect staphylococcal cytoplasmic proteins from degradation by SspB. Functionally, cysteine protease that plays an important role in the inhibition of host innate immune response. Degrades host elastin, fibrogen, fibronectin and kininogen. Blocks phagocytosis of opsonised S.aureus by neutrophils and monocytes by inducing their death in a proteolytic activity-dependent manner. Decreases surface expression of the 'don't eat me' signal CD31 on neutrophils. Cleaves host galectin-3/LGALS3, thereby inhibiting the neutrophil-activating ability of the lectin. This Staphylococcus aureus (strain MRSA252) protein is Staphopain B (sspB).